A 126-amino-acid chain; its full sequence is uncharacterized protein (126 aa).

The HTH hxlR-type domain maps to 20–118 (CPSREVLKHV…WIELNLPEVL (99 aa)).

This is an uncharacterized protein from Escherichia coli (strain K12).